The primary structure comprises 200 residues: Probable nicotinate-nucleotide adenylyltransferase (200 aa).

Belongs to the NadD family.

It carries out the reaction nicotinate beta-D-ribonucleotide + ATP + H(+) = deamido-NAD(+) + diphosphate. The protein operates within cofactor biosynthesis; NAD(+) biosynthesis; deamido-NAD(+) from nicotinate D-ribonucleotide: step 1/1. Functionally, catalyzes the reversible adenylation of nicotinate mononucleotide (NaMN) to nicotinic acid adenine dinucleotide (NaAD). The chain is Probable nicotinate-nucleotide adenylyltransferase from Clavibacter sepedonicus (Clavibacter michiganensis subsp. sepedonicus).